The chain runs to 181 residues: Large ribosomal subunit protein uL6 (181 aa).

This sequence belongs to the universal ribosomal protein uL6 family. Part of the 50S ribosomal subunit.

In terms of biological role, this protein binds to the 23S rRNA, and is important in its secondary structure. It is located near the subunit interface in the base of the L7/L12 stalk, and near the tRNA binding site of the peptidyltransferase center. The protein is Large ribosomal subunit protein uL6 of Saccharolobus solfataricus (strain ATCC 35092 / DSM 1617 / JCM 11322 / P2) (Sulfolobus solfataricus).